Consider the following 431-residue polypeptide: Translation initiation factor 2 subunit gamma (431 aa).

The tr-type G domain occupies 26 to 223 (QPCVNIGMVG…ALETQIPTPS (198 aa)). Residues 35–42 (GHVDHGKT) are G1. Positions 38, 42, 63, and 65 each coordinate Mg(2+). 38-43 (DHGKTT) contacts GTP. The interval 63-67 (GISIR) is G2. Cys-78, Cys-81, Cys-93, and Cys-96 together coordinate Zn(2+). The tract at residues 110–113 (DAPG) is G3. Residues 166–169 (NKID) and 201–203 (SAQ) contribute to the GTP site. The G4 stretch occupies residues 166–169 (NKID). The interval 201–203 (SAQ) is G5.

It belongs to the TRAFAC class translation factor GTPase superfamily. Classic translation factor GTPase family. EIF2G subfamily. In terms of assembly, heterotrimer composed of an alpha, a beta and a gamma chain. Mg(2+) is required as a cofactor.

The enzyme catalyses GTP + H2O = GDP + phosphate + H(+). Functionally, eIF-2 functions in the early steps of protein synthesis by forming a ternary complex with GTP and initiator tRNA. This Methanosarcina mazei (strain ATCC BAA-159 / DSM 3647 / Goe1 / Go1 / JCM 11833 / OCM 88) (Methanosarcina frisia) protein is Translation initiation factor 2 subunit gamma.